A 100-amino-acid chain; its full sequence is Urease subunit gamma (100 aa).

This sequence belongs to the urease gamma subunit family. As to quaternary structure, heterotrimer of UreA (gamma), UreB (beta) and UreC (alpha) subunits. Three heterotrimers associate to form the active enzyme.

It is found in the cytoplasm. It catalyses the reaction urea + 2 H2O + H(+) = hydrogencarbonate + 2 NH4(+). The protein operates within nitrogen metabolism; urea degradation; CO(2) and NH(3) from urea (urease route): step 1/1. The polypeptide is Urease subunit gamma (Synechococcus sp. (strain RCC307)).